Here is a 407-residue protein sequence, read N- to C-terminus: Flagellar calcium-binding protein TB-44A (407 aa).

Residues 1-27 (MGCSASKDTTNSKDGAASKGGKDGKTT) are disordered. Residues 25 to 399 (KTTADRKVAW…LQVCGDPDGE (375 aa)) form a 2 X 186 AA almost perfect repeats region. Positions 48 to 83 (ESKSRRIELFKRFDTNGTGKLSFREVLDGCYSILKL) constitute an EF-hand 1 domain. Residues Asp61, Asn63, Thr65, Lys67, and Glu72 each contribute to the Ca(2+) site. The interval 110-121 (GVGEEDLVEFLE) is ancestral calcium site 2. 3 consecutive EF-hand domains span residues 130-165 (YDIFELTVMFDTMDKDGSLLLELQEFKEALPKWKEW), 167-202 (VDITDATTVFNEIDTNGSGVVTFDEFSCWAVTKKLQ), and 237-272 (ESKSRRIELFKQFDTNGTGKLGFREVLDGCYSILKL). The Ca(2+) site is built by Asp143, Asp145, Ser147, Glu154, Asp180, Asn182, Ser184, Glu191, Asp250, Asn252, Thr254, Lys256, and Glu261. Residues 299 to 310 (GVGEEDLVEFLE) form an ancestral calcium site 6 region. 2 consecutive EF-hand domains span residues 319–354 (YDIFELTVMFDTMDKDGSLLLELQEFKEALKKWKEW) and 356–391 (VDITDATTVFNEIDTNGSGVVTFDEFSCWAVTKKLQ). Ca(2+) is bound by residues Asp332, Asp334, Ser336, Glu343, Asp369, Asn371, Ser373, and Glu380.

The protein belongs to the calflagin family.

The protein localises to the cell projection. Its subcellular location is the cilium. It is found in the flagellum. Its function is as follows. May contribute to the rapid motility of the trypanosomes, playing a role either in flagellar structure or in calcium metabolism. Could alternate between a GDP-bound inactive form to a calcium/GTP-bound active form. This Trypanosoma brucei brucei protein is Flagellar calcium-binding protein TB-44A.